A 134-amino-acid polypeptide reads, in one-letter code: uncharacterized protein (134 aa).

One can recognise an HIT domain in the interval 4 to 107; it reads IFTKIINREL…PTHSLSNFSF (104 aa). The Histidine triad motif signature appears at 91 to 95; sequence HLHIH.

This is an uncharacterized protein from Mycobacterium leprae (strain TN).